Reading from the N-terminus, the 718-residue chain is Protein Hook homolog 3 (718 aa).

Position 1 is an N-acetylmethionine (methionine 1). Positions 1-164 (MFNVESVERV…QELMSKESPV (164 aa)) are sufficient for interaction with microtubules. Position 6 is a phosphoserine (serine 6). Residues 10 to 126 (VELCESLLTW…RMLQLILGCA (117 aa)) enclose the Calponin-homology (CH) domain. Coiled coils occupy residues 168–433 (HDAY…VQAQ) and 462–663 (EIRE…MEEK). A Phosphoserine modification is found at serine 238. The sufficient for interaction with IIGP1 stretch occupies residues 450-671 (SSDSLAAEIV…EKYIVSAWYN (222 aa)). The tract at residues 553-718 (EKLHEANNEL…PGHVQPATAR (166 aa)) is required for association with Golgi. The disordered stretch occupies residues 682–718 (EDRLASTGSGQSFLARQRQATSTRRSYPGHVQPATAR). Residues 687 to 706 (STGSGQSFLARQRQATSTRR) are compositionally biased toward polar residues. 2 positions are modified to phosphoserine: serine 693 and serine 707.

This sequence belongs to the hook family. Self-associates. Component of the FTS/Hook/FHIP complex (FHF complex), composed of AKTIP/FTS, FHIP1B, and one or more members of the Hook family of proteins HOOK1, HOOK2, and HOOK3. May interact directly with AKTIP/FTS, HOOK1 and HOOK2. Associates with several subunits of the homotypic vesicular sorting complex (the HOPS complex) including VPS16 and VPS41; these interactions may be indirect. Interacts with IIGP1. Interacts with MSR1, and this association is stimulated by ligand binding to MSR1. Interacts with microtubules. Part of a tripartite complex with dynein and dynactin, acts an adapter linking the dynein motor complex and dynactin. Interacts with dynein intermediate chain and dynactin (DCTN1). Interacts with CCDC181. Interacts with LRGUK. In terms of assembly, (Microbial infection) Interacts with Salmonella typhimurium spiC. In terms of tissue distribution, expressed in brain, cerebellum, heart, intestine, kidney, liver, lung, skeletal muscle, spleen and stomach (at protein level).

Its subcellular location is the cytoplasm. The protein resides in the cytoskeleton. It is found in the golgi apparatus. Its function is as follows. Acts as an adapter protein linking the dynein motor complex to various cargos and converts dynein from a non-processive to a highly processive motor in the presence of dynactin. Facilitates the interaction between dynein and dynactin and activates dynein processivity (the ability to move along a microtubule for a long distance without falling off the track). Predominantly recruits 2 dyneins, which increases both the force and speed of the microtubule motor. Component of the FTS/Hook/FHIP complex (FHF complex). The FHF complex may function to promote vesicle trafficking and/or fusion via the homotypic vesicular protein sorting complex (the HOPS complex). May regulate clearance of endocytosed receptors such as MSR1. Participates in defining the architecture and localization of the Golgi complex. FHF complex promotes the distribution of AP-4 complex to the perinuclear area of the cell. Functionally, (Microbial infection) Serves as a target for the spiC protein from Salmonella typhimurium, which inactivates it, leading to a strong alteration in cellular trafficking. This chain is Protein Hook homolog 3 (Hook3), found in Mus musculus (Mouse).